The primary structure comprises 78 residues: Acyl carrier protein (78 aa).

Positions 2–77 constitute a Carrier domain; sequence SNLEERVKKI…AAIDYVTANA (76 aa). Ser-37 carries the post-translational modification O-(pantetheine 4'-phosphoryl)serine.

Belongs to the acyl carrier protein (ACP) family. Post-translationally, 4'-phosphopantetheine is transferred from CoA to a specific serine of apo-ACP by AcpS. This modification is essential for activity because fatty acids are bound in thioester linkage to the sulfhydryl of the prosthetic group.

The protein resides in the cytoplasm. The protein operates within lipid metabolism; fatty acid biosynthesis. In terms of biological role, carrier of the growing fatty acid chain in fatty acid biosynthesis. The protein is Acyl carrier protein of Vibrio vulnificus (strain CMCP6).